Reading from the N-terminus, the 297-residue chain is Malonyl-[acyl-carrier protein] O-methyltransferase (297 aa).

The protein belongs to the methyltransferase superfamily.

The enzyme catalyses malonyl-[ACP] + S-adenosyl-L-methionine = malonyl-[ACP] methyl ester + S-adenosyl-L-homocysteine. The protein operates within cofactor biosynthesis; biotin biosynthesis. In terms of biological role, converts the free carboxyl group of a malonyl-thioester to its methyl ester by transfer of a methyl group from S-adenosyl-L-methionine (SAM). It allows to synthesize pimeloyl-ACP via the fatty acid synthetic pathway. The protein is Malonyl-[acyl-carrier protein] O-methyltransferase of Laribacter hongkongensis (strain HLHK9).